The following is a 117-amino-acid chain: Photosystem II reaction center Psb28 protein (117 aa).

The protein belongs to the Psb28 family. Part of the photosystem II complex.

It localises to the cellular thylakoid membrane. The protein is Photosystem II reaction center Psb28 protein of Prochlorococcus marinus (strain MIT 9215).